The primary structure comprises 642 residues: 3D-(3,5/4)-trihydroxycyclohexane-1,2-dione hydrolase (642 aa).

Glu-71 contacts thiamine diphosphate. The tract at residues 446 to 526 (SLPGDVQRIW…INILVFDNSG (81 aa)) is thiamine pyrophosphate binding. Mg(2+) is bound by residues Asp-497 and Asn-524.

It belongs to the TPP enzyme family. Mg(2+) is required as a cofactor. The cofactor is thiamine diphosphate.

The catalysed reaction is 3D-3,5/4-trihydroxycyclohexane-1,2-dione + H2O = 5-deoxy-D-glucuronate + H(+). It participates in polyol metabolism; myo-inositol degradation into acetyl-CoA; acetyl-CoA from myo-inositol: step 3/7. In terms of biological role, involved in the cleavage of the C1-C2 bond of 3D-(3,5/4)-trihydroxycyclohexane-1,2-dione (THcHDO) to yield 5-deoxy-glucuronate (5DG). The protein is 3D-(3,5/4)-trihydroxycyclohexane-1,2-dione hydrolase of Lacticaseibacillus casei (Lactobacillus casei).